The following is a 1630-amino-acid chain: Separin (1630 aa).

The segment at serine 1016–glycine 1037 is disordered. In terms of domain architecture, Peptidase C50 spans glutamate 1443–leucine 1542. Residue cysteine 1531 is part of the active site.

In terms of assembly, may bind calcium. Interacts with PDS1. Interacts with MCD1.

The protein resides in the nucleus. The protein localises to the cytoplasm. Its subcellular location is the cytoskeleton. It is found in the microtubule organizing center. It localises to the spindle pole body. It catalyses the reaction All bonds known to be hydrolyzed by this endopeptidase have arginine in P1 and an acidic residue in P4. P6 is often occupied by an acidic residue or by a hydroxy-amino-acid residue, the phosphorylation of which enhances cleavage.. Its activity is regulated as follows. It is inactivated via its interaction with PDS1, which probably covers its active site. PDS1 degradation at anaphase, liberates it and triggers MCD1 cleavage. Functionally, caspase-like protease, which plays a central role in the chromosome segregation by cleaving the MCD1/SCC1 subunit of the cohesin complex at the onset of anaphase. During most of the cell cycle, it is inactivated by securin/PDS1 protein. It also promotes anaphase spindle elongation. A component of the FEAR (CDC14 early anaphase release) network which promotes CDC14 release from the nucleolus during early anaphase. Cleaves SLK19. This Saccharomyces cerevisiae (strain ATCC 204508 / S288c) (Baker's yeast) protein is Separin (ESP1).